A 199-amino-acid chain; its full sequence is Probable GTP-binding protein EngB (199 aa).

The 175-residue stretch at 22–196 (NWPEFAFSGR…GKFILDLVDS (175 aa)) folds into the EngB-type G domain. GTP contacts are provided by residues 30–37 (GRSNVGKS), 57–61 (GRTQS), 75–78 (DLPG), 142–145 (TKVD), and 175–177 (FSA). Residues Ser-37 and Thr-59 each contribute to the Mg(2+) site.

It belongs to the TRAFAC class TrmE-Era-EngA-EngB-Septin-like GTPase superfamily. EngB GTPase family. Mg(2+) serves as cofactor.

Functionally, necessary for normal cell division and for the maintenance of normal septation. This chain is Probable GTP-binding protein EngB, found in Halothermothrix orenii (strain H 168 / OCM 544 / DSM 9562).